Here is a 347-residue protein sequence, read N- to C-terminus: GMP reductase (347 aa).

Position 108-131 (108-131) interacts with NADP(+); it reads ADFQKTKDIMALTEDLIFICIDIA. 2 residues coordinate K(+): G181 and G183. Residue C186 is the Thioimidate intermediate of the active site. NADP(+) is bound at residue 216–239; the sequence is IIGDGGCSCAGDVSKAFGGGADFV.

Belongs to the IMPDH/GMPR family. GuaC type 1 subfamily. As to quaternary structure, homotetramer.

It catalyses the reaction IMP + NH4(+) + NADP(+) = GMP + NADPH + 2 H(+). Its function is as follows. Catalyzes the irreversible NADPH-dependent deamination of GMP to IMP. It functions in the conversion of nucleobase, nucleoside and nucleotide derivatives of G to A nucleotides, and in maintaining the intracellular balance of A and G nucleotides. In Photobacterium profundum (strain SS9), this protein is GMP reductase.